The following is a 239-amino-acid chain: Adapter protein MecA (239 aa).

Basic and acidic residues predominate over residues Glu118–Gly128. A disordered region spans residues Glu118–Arg137.

It belongs to the MecA family. In terms of assembly, homodimer.

Functionally, enables the recognition and targeting of unfolded and aggregated proteins to the ClpC protease or to other proteins involved in proteolysis. The sequence is that of Adapter protein MecA from Staphylococcus aureus (strain Mu3 / ATCC 700698).